A 46-amino-acid polypeptide reads, in one-letter code: Photosystem II reaction center protein K (46 aa).

A propeptide spanning residues 1–9 (MLTLLNTFA) is cleaved from the precursor. The chain crosses the membrane as a helical span at residues 25-45 (LPLIPLFFFLLVFVWQAAVGF).

It belongs to the PsbK family. In terms of assembly, PSII is composed of 1 copy each of membrane proteins PsbA, PsbB, PsbC, PsbD, PsbE, PsbF, PsbH, PsbI, PsbJ, PsbK, PsbL, PsbM, PsbT, PsbX, PsbY, Psb30/Ycf12, peripheral proteins PsbO, CyanoQ (PsbQ), PsbU, PsbV and a large number of cofactors. It forms dimeric complexes.

It is found in the cellular thylakoid membrane. Functionally, one of the components of the core complex of photosystem II (PSII). PSII is a light-driven water:plastoquinone oxidoreductase that uses light energy to abstract electrons from H(2)O, generating O(2) and a proton gradient subsequently used for ATP formation. It consists of a core antenna complex that captures photons, and an electron transfer chain that converts photonic excitation into a charge separation. The protein is Photosystem II reaction center protein K of Prochlorococcus marinus (strain MIT 9515).